A 674-amino-acid polypeptide reads, in one-letter code: uncharacterized protein (674 aa).

The N-terminal stretch at 1–24 is a signal peptide; that stretch reads MKTLKALKIFIIVYISSVSLESFA. Transmembrane regions (helical) follow at residues 226–246 and 254–274; these read IIGA…ALNK and ITLF…LEPL. The segment at 363–384 is disordered; sequence GNGPGGNNKPIPNFDPDSKKDR. The next 4 membrane-spanning stretches (helical) occupy residues 409 to 429, 436 to 456, 469 to 489, and 562 to 582; these read IIIL…LLYF, CMIT…MVLF, VCIS…LLIT, and VVSI…FYYF. The segment at 624–674 is disordered; it reads SSVHAQGKSPVEDKPDIGSKRKDGVQQGEDSENSSGGELADLASGSGGGKL. Basic and acidic residues predominate over residues 633 to 647; sequence PVEDKPDIGSKRKDG.

It belongs to the TrbL/VirB6 family.

The protein localises to the cell membrane. This is an uncharacterized protein from Rickettsia typhi (strain ATCC VR-144 / Wilmington).